A 184-amino-acid polypeptide reads, in one-letter code: dTTP/UTP pyrophosphatase (184 aa).

Asp67 acts as the Proton acceptor in catalysis.

This sequence belongs to the Maf family. YhdE subfamily. It depends on a divalent metal cation as a cofactor.

It localises to the cytoplasm. It carries out the reaction dTTP + H2O = dTMP + diphosphate + H(+). It catalyses the reaction UTP + H2O = UMP + diphosphate + H(+). Its function is as follows. Nucleoside triphosphate pyrophosphatase that hydrolyzes dTTP and UTP. May have a dual role in cell division arrest and in preventing the incorporation of modified nucleotides into cellular nucleic acids. The sequence is that of dTTP/UTP pyrophosphatase from Elusimicrobium minutum (strain Pei191).